We begin with the raw amino-acid sequence, 1334 residues long: MPSSSDELIFFVNGKKVIEKNPVPEMNLLFYVRKVLHLTGTKYSCGGGGCGACTVMISRYNPESKKIYHYPATACLVPVCSLHGAAVTTVEGVGSIKRRIHPVQERLAKCHGTQCGFCSPGMVMSIYTLLRNHPEPTPDQITEALGGNLCRCTGYRPIVESGKTFSPESSVCQMKGSGKCCMDLDEGCSESTKERMCTKLYNEDEFQPLDPSQEPIFPPELIRMAEDPHKRRLTFQGERTIWIMPVTLNGLLELKASYPEAPLVMGNTAVGPGMKFNNEFHPVFISPLGLPELNLVDTANSGGVTIGARHSLAQMKDILHSLTLEQPKEKTKTHQALLKHLRTLAGPQIRNMATLGGHVVSRPDFSDLNPILAAGNATINVISKEGQRQIPLNGPFLERLPEASLKPEEVALSVFIPYSGQWQYVSGLRLAQRQENAFAIVNAGMSVEFEEGTNTIKDLQMLFGSVAPTVVSASQTCKQLIGRQWDDQMLSDACQLVLEEIRIPPDAEGGMVEYRRTLIISLLFKFYLKVRRWLSEMDPQKFPDIPEKFVSALDDLPIETPQGIQMFQCVDPNQPEQDPVGHPIMHQSGIKHATGEAKFVDDMPRINQELCLTVVTSTRAHAKITSIDVSEALAYPGVVDVITAEDVPGDNNHSGEIFYAQNEVICVGQIICTVAADTYIHAKEAAKRVKITYDDIEPAIITIEQALEHNSFLSSEKKIEQGNVDYAFKHVDHIIEGEIHVEGQEHFYMETQTILAIPQTEDKEMVLHVGTQFPTHVQEYVSAALKVPRNRIACQMKRTGGAFGGKVTKPALLGAVCAVAAHKTGRPIRFILDRSNDMLITAGRHPLLGKYKIGFMNNGKIKAADVEYYTNGGCTPDESEMVIEFIVLKSENAYHIPNFRCRGRACKTNLPSNTAFRGFGFPQATVVVEAYIAAVASKCNLLPEEIREINMYKQISKTAYKQTFNPEPLRRCWKECLQKSSFFARKQAAEEFNKNNYWKKKGLAVVPMKFSVAVPMAFYNQAAALVHIFLDGSVLLTHGGCELGQGLHTKMIQVASRELNIPKSYVHLVETSTVTVPNAVFTAGSMGADINGKAVQNACQTLLDRLQPIIKKNPKGKWEEWVKKAFEESISLSATGYFKGYQTNMDWEKEEGDPYPYYVYGAACSEVEVDCLTGAHKLLRTDIFMDAAFSINPALDIGQVEGAFIQGMGFYTIEELKYSPKGVLYSRGPDDYKIPTVTEIPEEFYVTMVRSRNPIAIYSSKGLGEAGMFLGSSVLFAIYDAVTTARKERGLSDIFPLNSPATPEVIRMACKDQFTDMIPRDDPSTFTPWSIHVS.

The 2Fe-2S ferredoxin-type domain occupies Asp6–Val93. [2Fe-2S] cluster-binding residues include Cys45, Cys50, Cys53, and Cys75. Gln114 contributes to the Mo-molybdopterin binding site. Residues Cys115, Cys118, Cys150, and Cys152 each coordinate [2Fe-2S] cluster. Cys152 serves as a coordination point for Mo-molybdopterin. Positions Phe235–Gln421 constitute an FAD-binding PCMH-type domain. Residues Leu263–Val270, Ala345, Thr354, His358, Asp367, and Ala411 contribute to the FAD site. Mo-molybdopterin-binding positions include Ala802, Ala802–Phe803, Leu1043, Gly1084–Gly1087, Gln1199, and Leu1263. The active-site Proton acceptor; for azaheterocycle hydroxylase activity is Glu1265.

It belongs to the xanthine dehydrogenase family. In terms of assembly, homodimer. [2Fe-2S] cluster serves as cofactor. Requires FAD as cofactor. It depends on Mo-molybdopterin as a cofactor.

The protein resides in the cytoplasm. It catalyses the reaction an aldehyde + O2 + H2O = a carboxylate + H2O2 + H(+). The enzyme catalyses retinal + O2 + H2O = retinoate + H2O2 + H(+). In terms of biological role, aldehyde oxidase able to catalyze the oxidation of retinaldehyde into retinoate. Acts as a negative modulator of the epidermal trophism. May be able to oxidize a wide variety of aldehydes into their corresponding carboxylates and to hydroxylate azaheterocycles. In Rattus norvegicus (Rat), this protein is Aldehyde oxidase 4 (Aox4).